Reading from the N-terminus, the 1331-residue chain is X-linked retinitis pigmentosa GTPase regulator-interacting protein 1 (1331 aa).

3 disordered regions span residues 1–165 (MQHL…PPAF), 183–220 (SQLT…SEEC), and 351–374 (HQPL…LPPQ). Residues 41 to 67 (NQKELNCRRLHLHEEPTLVKEPSPKQR) are compositionally biased toward basic and acidic residues. Polar residues-rich tracts occupy residues 77-86 (VQRSTTTQPD) and 183-193 (SQLTHTMTTDS). Over residues 194–220 (THVEEIPRSPEKTSKVEKPEQRSSEEC) the composition is skewed to basic and acidic residues. Coiled coils occupy residues 236–352 (ELIR…SSHQ) and 498–546 (MCYQ…LRSH). A compositionally biased stretch (polar residues) spans 351 to 367 (HQPLDSSHQPHWSTELT). Residues 745–870 (GARKVQSNES…AQNKSIKGDF (126 aa)) enclose the C2 domain. 2 disordered regions span residues 899–1057 (FQMS…VQDK) and 1088–1146 (AEDG…SDDI). A coiled-coil region spans residues 908–999 (EGEEKEEEGG…DVLEASFTEE (92 aa)). The segment covering 910-988 (EEKEEEGGEE…EEEEEEEDEN (79 aa)) has biased composition (acidic residues). 2 stretches are compositionally biased toward basic and acidic residues: residues 1022–1039 (PEKR…REHQ) and 1088–1115 (AEDG…EHPS). Polar residues predominate over residues 1129–1141 (CEQASEVSETQTT). The tract at residues 1136-1326 (SETQTTDSDD…ALHGIYKEMT (191 aa)) is interaction with RPGR.

This sequence belongs to the RPGRIP1 family. In terms of assembly, interacts with NPHP4. Interacts with NEK4. Forms homodimers and elongated homopolymers. Interacts with RPGR. Interacts with SPATA7. Interacts with CEP290/NPHP6; mediating the association between RPGR and CEP290/NPHP6. In terms of tissue distribution, expressed in the retina (at protein level).

Its subcellular location is the cell projection. It localises to the cilium. Its function is as follows. May function as scaffolding protein. Required for normal location of RPGR at the connecting cilium of photoreceptor cells. Required for normal disk morphogenesis and disk organization in the outer segment of photoreceptor cells and for survival of photoreceptor cells. The sequence is that of X-linked retinitis pigmentosa GTPase regulator-interacting protein 1 (Rpgrip1) from Mus musculus (Mouse).